The following is a 315-amino-acid chain: Methionyl-tRNA formyltransferase (315 aa).

113–116 (SILP) provides a ligand contact to (6S)-5,6,7,8-tetrahydrofolate.

This sequence belongs to the Fmt family.

The enzyme catalyses L-methionyl-tRNA(fMet) + (6R)-10-formyltetrahydrofolate = N-formyl-L-methionyl-tRNA(fMet) + (6S)-5,6,7,8-tetrahydrofolate + H(+). Functionally, attaches a formyl group to the free amino group of methionyl-tRNA(fMet). The formyl group appears to play a dual role in the initiator identity of N-formylmethionyl-tRNA by promoting its recognition by IF2 and preventing the misappropriation of this tRNA by the elongation apparatus. The chain is Methionyl-tRNA formyltransferase from Aliivibrio fischeri (strain MJ11) (Vibrio fischeri).